A 443-amino-acid chain; its full sequence is Tol-Pal system protein TolB (443 aa).

The first 33 residues, 1–33 (MKIGIINTKIRTVFSAFACMIAASLVCTMPARA), serve as a signal peptide directing secretion.

This sequence belongs to the TolB family. As to quaternary structure, the Tol-Pal system is composed of five core proteins: the inner membrane proteins TolA, TolQ and TolR, the periplasmic protein TolB and the outer membrane protein Pal. They form a network linking the inner and outer membranes and the peptidoglycan layer.

The protein resides in the periplasm. Its function is as follows. Part of the Tol-Pal system, which plays a role in outer membrane invagination during cell division and is important for maintaining outer membrane integrity. The chain is Tol-Pal system protein TolB from Brucella suis (strain ATCC 23445 / NCTC 10510).